Reading from the N-terminus, the 428-residue chain is Adenylosuccinate synthetase (428 aa).

GTP is bound by residues 12-18 (GDEGKGK) and 40-42 (GHT). Residue Asp13 is the Proton acceptor of the active site. Residues Asp13 and Gly40 each contribute to the Mg(2+) site. IMP is bound by residues 13 to 16 (DEGK), 38 to 41 (NAGH), Thr130, Arg144, Gln225, Thr240, and Arg304. His41 serves as the catalytic Proton donor. A substrate-binding site is contributed by 300–306 (VNTGRSR). GTP contacts are provided by residues Arg306, 332 to 334 (KID), and 414 to 416 (GVG).

This sequence belongs to the adenylosuccinate synthetase family. As to quaternary structure, homodimer. Mg(2+) is required as a cofactor.

It localises to the cytoplasm. It catalyses the reaction IMP + L-aspartate + GTP = N(6)-(1,2-dicarboxyethyl)-AMP + GDP + phosphate + 2 H(+). The protein operates within purine metabolism; AMP biosynthesis via de novo pathway; AMP from IMP: step 1/2. In terms of biological role, plays an important role in the de novo pathway of purine nucleotide biosynthesis. Catalyzes the first committed step in the biosynthesis of AMP from IMP. The chain is Adenylosuccinate synthetase from Clostridium beijerinckii (strain ATCC 51743 / NCIMB 8052) (Clostridium acetobutylicum).